The chain runs to 53 residues: Lectin alpha chain (53 aa).

It belongs to the leguminous lectin family. Tetramer of two alpha and two beta chains.

The polypeptide is Lectin alpha chain (Lathyrus clymenum (Spanish vetchling)).